Reading from the N-terminus, the 297-residue chain is Transmembrane protein 169 (297 aa).

Residues 1–84 (MEEPALVEGQ…PKEEEGDDFI (84 aa)) are disordered. The Extracellular segment spans residues 1–159 (MEEPALVEGQ…CQLGADRGPH (159 aa)). A compositionally biased stretch (polar residues) spans 9–18 (GQSQLPSPHH). Positions 60-84 (ETLDEEPGESEGGDQPKEEEGDDFI) are enriched in acidic residues. A helical membrane pass occupies residues 160 to 180 (VVLWTLVCLPVVFLLSFVVSF). Over 181 to 210 (YYGTITWYNIFLVYNEERTFWHKISCCPCL) the chain is Cytoplasmic. The helical transmembrane segment at 211-231 (ILCYPVLIMAMASSLGLYAAV) threads the bilayer. Residues 232–297 (VQLSWSWEAW…ATQEIETSAV (66 aa)) are Extracellular-facing.

Its subcellular location is the membrane. In Bos taurus (Bovine), this protein is Transmembrane protein 169 (TMEM169).